We begin with the raw amino-acid sequence, 698 residues long: Probable Xaa-Pro aminopeptidase P (698 aa).

The Mn(2+) site is built by D509, D520, E604, and E618.

This sequence belongs to the peptidase M24B family. The cofactor is Mn(2+).

The enzyme catalyses Release of any N-terminal amino acid, including proline, that is linked to proline, even from a dipeptide or tripeptide.. Catalyzes the removal of a penultimate prolyl residue from the N-termini of peptides. The protein is Probable Xaa-Pro aminopeptidase P (AMPP) of Trichophyton verrucosum (strain HKI 0517).